Here is a 37-residue protein sequence, read N- to C-terminus: Large ribosomal subunit protein bL36c (37 aa).

The protein belongs to the bacterial ribosomal protein bL36 family.

Its subcellular location is the plastid. It is found in the chloroplast. This chain is Large ribosomal subunit protein bL36c, found in Cucumis sativus (Cucumber).